Here is a 555-residue protein sequence, read N- to C-terminus: Tau-cadinol synthase (555 aa).

Residues Arg270, Asp307, Asp311, Arg448, and Asp451 each coordinate (2E,6E)-farnesyl diphosphate. Residues Asp307 and Asp311 each coordinate Mg(2+). The short motif at 307 to 311 is the DDXXD motif element; it reads DDTYD. 3 residues coordinate Mg(2+): Asp451, Ser455, and Glu459.

The protein belongs to the terpene synthase family. Requires Mg(2+) as cofactor.

It carries out the reaction (2E,6E)-farnesyl diphosphate + H2O = tau-cadinol + diphosphate. The catalysed reaction is (2E,6E)-farnesyl diphosphate = (+)-gamma-cadinene + diphosphate. Its pathway is secondary metabolite biosynthesis; terpenoid biosynthesis. Sesquiterpene synthase that catalyzes the formation of sesquiterpenes and sesquiterpenoid alcohols. Converts farnesyl diphosphate (FPP) to tau-cadinol. Converts FPP to gamma-cadinene. Tau-cadinol is the major product. In Lavandula angustifolia (Lavender), this protein is Tau-cadinol synthase.